Reading from the N-terminus, the 711-residue chain is Toxin RTX-III translocation ATP-binding protein (711 aa).

One can recognise a Peptidase C39 domain in the interval 1–129 (MESQMPFNEK…EIFQGGMILI (129 aa)). Histidine 87 is a catalytic residue. Residues 158–440 (FVETIIVSIF…LAQLWQDFQQ (283 aa)) form the ABC transmembrane type-1 domain. Transmembrane regions (helical) follow at residues 162-182 (IIVS…FQVV), 195-215 (LNVI…LSGL), 273-293 (ALTS…MWYY), 299-319 (IVIL…SPIL), and 392-412 (VMII…LSIG). Residues 472-707 (IAFKHIRFRY…ENGLYYYLNQ (236 aa)) enclose the ABC transporter domain. 506-513 (GRSGSGKS) is a binding site for ATP.

Belongs to the ABC transporter superfamily. Protein-1 exporter (TC 3.A.1.109) family. In terms of assembly, homodimer.

It localises to the cell membrane. Its function is as follows. Involved in the transport of the toxin RTX-III. This Actinobacillus pleuropneumoniae (Haemophilus pleuropneumoniae) protein is Toxin RTX-III translocation ATP-binding protein (apxIIIB).